An 873-amino-acid polypeptide reads, in one-letter code: DNA mismatch repair protein MutS (873 aa).

628-635 is an ATP binding site; the sequence is GPNMAGKS.

Belongs to the DNA mismatch repair MutS family.

Its function is as follows. This protein is involved in the repair of mismatches in DNA. It is possible that it carries out the mismatch recognition step. This protein has a weak ATPase activity. This Chlorobium chlorochromatii (strain CaD3) protein is DNA mismatch repair protein MutS.